The following is a 138-amino-acid chain: Large ribosomal subunit protein bL17 (138 aa).

The segment at 118–138 is disordered; that stretch reads RDEDAKGKDSGPSQDGAAEAA.

Belongs to the bacterial ribosomal protein bL17 family. As to quaternary structure, part of the 50S ribosomal subunit. Contacts protein L32.

The protein is Large ribosomal subunit protein bL17 of Rhodopseudomonas palustris (strain HaA2).